Consider the following 165-residue polypeptide: Regulator of ribonuclease activity A (165 aa).

This sequence belongs to the RraA family. In terms of assembly, homotrimer. Binds to both RNA-binding sites in the C-terminal region of Rne and to RhlB.

The protein localises to the cytoplasm. Its function is as follows. Globally modulates RNA abundance by binding to RNase E (Rne) and regulating its endonucleolytic activity. Can modulate Rne action in a substrate-dependent manner by altering the composition of the degradosome. Modulates RNA-binding and helicase activities of the degradosome. This is Regulator of ribonuclease activity A from Pseudoalteromonas translucida (strain TAC 125).